The chain runs to 262 residues: Ribosome maturation factor RimP (262 aa).

Positions 197–262 (RELGVLPPPP…LGQTDPTEGD (66 aa)) are disordered. Residues 223 to 233 (KLPKAKLKAAK) are compositionally biased toward basic residues. Basic and acidic residues predominate over residues 240–254 (TKEHRLAAAERKRLG).

Belongs to the RimP family.

Its subcellular location is the cytoplasm. Required for maturation of 30S ribosomal subunits. The sequence is that of Ribosome maturation factor RimP from Rhodopseudomonas palustris (strain BisB18).